We begin with the raw amino-acid sequence, 658 residues long: Carnitine O-palmitoyltransferase 2, mitochondrial (658 aa).

The N-terminal 25 residues, 1-25 (MVARLLLRSWSRGLAVGPGAPCRPL), are a transit peptide targeting the mitochondrion. Residues 26–178 (STGFEPSQYL…DLLEPEVFHL (153 aa)) lie on the Mitochondrial matrix side of the membrane. K69 is modified (N6-succinyllysine). Residue K79 is modified to N6-acetyllysine. K85 is subject to N6-succinyllysine. Positions 179–208 (NPAKSDTDTFKRFIRFVPSFLSWYGAYLVN) form an intramembrane region, note=Mitochondrial inner membrane. Over 209–658 (AYPLDMSQYY…DALEGKMIKT (450 aa)) the chain is Mitochondrial matrix. K239 carries the post-translational modification N6-acetyllysine; alternate. K239 bears the N6-succinyllysine; alternate mark. Residue H372 is the Proton acceptor of the active site. K418 bears the N6-acetyllysine; alternate mark. The residue at position 418 (K418) is an N6-succinyllysine; alternate. N6-succinyllysine is present on residues K424 and K439. Residue 452 to 464 (GREFLKKQKLSPD) participates in CoA binding. (R)-carnitine-binding residues include Y486, S488, and T499. N6-acetyllysine; alternate is present on K510. Residue K510 is modified to N6-succinyllysine; alternate.

It belongs to the carnitine/choline acetyltransferase family.

It localises to the mitochondrion inner membrane. It carries out the reaction (R)-carnitine + hexadecanoyl-CoA = O-hexadecanoyl-(R)-carnitine + CoA. The enzyme catalyses octanoyl-CoA + (R)-carnitine = O-octanoyl-(R)-carnitine + CoA. The catalysed reaction is decanoyl-CoA + (R)-carnitine = O-decanoyl-(R)-carnitine + CoA. It catalyses the reaction dodecanoyl-CoA + (R)-carnitine = O-dodecanoyl-R-carnitine + CoA. It carries out the reaction tetradecanoyl-CoA + (R)-carnitine = O-tetradecanoyl-(R)-carnitine + CoA. The enzyme catalyses (R)-carnitine + octadecanoyl-CoA = O-octadecanoyl-(R)-carnitine + CoA. The catalysed reaction is eicosanoyl-CoA + (R)-carnitine = O-eicosanoyl-(R)-carnitine + CoA. It catalyses the reaction (9Z)-tetradecenoyl-CoA + (R)-carnitine = O-(9Z)-tetradecenoyl-(R)-carnitine + CoA. It carries out the reaction (5Z)-tetradecenoyl-CoA + (R)-carnitine = O-(5Z)-tetradecenoyl-(R)-carnitine + CoA. The enzyme catalyses (R)-carnitine + (9Z)-octadecenoyl-CoA = O-(9Z)-octadecenoyl-(R)-carnitine + CoA. The catalysed reaction is 4,8-dimethylnonanoyl-CoA + (R)-carnitine = O-4,8-dimethylnonanoyl-(R)-carnitine + CoA. The protein operates within lipid metabolism; fatty acid beta-oxidation. Functionally, involved in the intramitochondrial synthesis of acylcarnitines from accumulated acyl-CoA metabolites. Reconverts acylcarnitines back into the respective acyl-CoA esters that can then undergo beta-oxidation, an essential step for the mitochondrial uptake of long-chain fatty acids and their subsequent beta-oxidation in the mitochondrion. Active with medium (C8-C12) and long-chain (C14-C18) acyl-CoA esters. The sequence is that of Carnitine O-palmitoyltransferase 2, mitochondrial (CPT2) from Bos taurus (Bovine).